Here is a 500-residue protein sequence, read N- to C-terminus: MKIRPEEISGIIKTEIENYKKSLDVKTSGSVVQVGDGIARIYGLSNAKAGELLEFPNGITGMALNLEENNVGAVILGDPTGVKEGDEVRATGQIAAVGAGEALLGRVVNSLGEPIDGKGELKTEKMMPLDRKAYGIISRKPVHEPLQTGIKSIDGMVPIGRGQRELIIGDRQTGKTAVALDAIINQKDTGVKCIYVAIGQKRSTVAQIVKRLEDAGALEYTIVVAATASESAPLQYMAPYTGVSMGEYFMDKGEHVLIVYDDLSKHAVAYREMSLLLKRPPGREAFPGDVFYLHSRLLERAAKLSDEIGAGSITALPIIETQAGDVSAYIPTNVISITDGQIFLDSQLFNSGFRPAINAGISVSRVGGAAQIKAMKQVAAQVKLELAQYNELLTFAQFGSDLDKATLAQLERGHRIMEILKQEQYKPFVVEEQVVSFFTVINGYLDDIAIDQVRRFEKELLEELKDNTTILAEIVEKKAIKEDLDAKLRKAIEDFKKKFS.

Position 169 to 176 (169 to 176 (GDRQTGKT)) interacts with ATP.

This sequence belongs to the ATPase alpha/beta chains family. F-type ATPases have 2 components, CF(1) - the catalytic core - and CF(0) - the membrane proton channel. CF(1) has five subunits: alpha(3), beta(3), gamma(1), delta(1), epsilon(1). CF(0) has three main subunits: a, b and c.

Its subcellular location is the cell membrane. The enzyme catalyses 4 Na(+)(in) + ATP + H2O = 4 Na(+)(out) + ADP + phosphate + H(+). Its function is as follows. Produces ATP from ADP in the presence of a sodium ion gradient across the membrane. The alpha chain is a regulatory subunit. The polypeptide is ATP synthase subunit alpha, sodium ion specific (Propionigenium modestum).